The primary structure comprises 255 residues: NAD kinase (255 aa).

Asp44 functions as the Proton acceptor in the catalytic mechanism. NAD(+)-binding positions include 44 to 45 (DG), His49, 114 to 115 (NE), Asp144, Ala152, 155 to 160 (SAYNLS), and Gln216.

Belongs to the NAD kinase family. The cofactor is a divalent metal cation.

It localises to the cytoplasm. It carries out the reaction NAD(+) + ATP = ADP + NADP(+) + H(+). Its function is as follows. Involved in the regulation of the intracellular balance of NAD and NADP, and is a key enzyme in the biosynthesis of NADP. Catalyzes specifically the phosphorylation on 2'-hydroxyl of the adenosine moiety of NAD to yield NADP. This is NAD kinase from Rickettsia felis (strain ATCC VR-1525 / URRWXCal2) (Rickettsia azadi).